The chain runs to 206 residues: Probable GTP-binding protein EngB (206 aa).

Residues 8-195 (RSDEVVLVGR…EDAVNSHFDA (188 aa)) enclose the EngB-type G domain. GTP-binding positions include 16–23 (GRSNVGKS), 41–45 (GVTRQ), 60–63 (DLPG), 140–143 (NKMD), and 175–177 (ITA). The Mg(2+) site is built by serine 23 and threonine 43.

It belongs to the TRAFAC class TrmE-Era-EngA-EngB-Septin-like GTPase superfamily. EngB GTPase family. It depends on Mg(2+) as a cofactor.

In terms of biological role, necessary for normal cell division and for the maintenance of normal septation. In Halobacterium salinarum (strain ATCC 29341 / DSM 671 / R1), this protein is Probable GTP-binding protein EngB.